The sequence spans 763 residues: ATP-dependent RNA helicase glh-1 (763 aa).

A disordered region spans residues 1-30 (MSDGWSDSESAAKAKTGFGSGGGFGGGNNG). Gly residues predominate over residues 18–30 (FGSGGGFGGGNNG). 7 consecutive repeat copies span residues 24 to 33 (FGGGNNGGSG), 34 to 43 (FGGGKNGGTG), 44 to 53 (FGGGNTGGSG), 54 to 63 (FGGGNTGGSG), 64 to 73 (FGGGKTGGSG), 74 to 83 (FGGGNTCGSG), and 84 to 93 (FGGGSTGGSP). The segment at 24–93 (FGGGNNGGSG…FGGGSTGGSP (70 aa)) is 7 X 10 AA tandem repeats, Gly-rich. 2 CCHC-type zinc fingers span residues 158–175 (NNCFNCQQPGHRSSDCPE) and 183–200 (RVCYNCQQPGHTSRECTE). The disordered stretch occupies residues 193-230 (HTSRECTEERKPREGRTGGFGGGAGFGNNGGNDGFGGD). Basic and acidic residues predominate over residues 194–208 (TSRECTEERKPREGR). The segment covering 209–230 (TGGFGGGAGFGNNGGNDGFGGD) has biased composition (gly residues). 2 CCHC-type zinc fingers span residues 242 to 259 (MKCFNCKGEGHRSAECPE) and 262 to 279 (RGCFNCGEQGHRSNECPN). A Q motif motif is present at residues 341-369 (KTFAEANLTETMQKNVAHAGYSKTTPIQQ). The Helicase ATP-binding domain maps to 372–556 (LPLVHQGYDI…RAFLRENYVM (185 aa)). ATP is bound at residue 385–392 (AQTGSGKT). A Phosphodegron motif is present at residues 423–427 (ILTPT). Positions 499–502 (DEAD) match the DEAD box motif. Positions 592–739 (DIDSYTTEKS…IVPDWMQGAA (148 aa)) constitute a Helicase C-terminal domain.

This sequence belongs to the DEAD box helicase family. DDX4/VASA subfamily. As to quaternary structure, interacts with csn-5; this may prevent glh-1 degradation induced by kgb-1. Interacts with zyx-1. Interacts (via the N-terminal region containing the four CCHC zinc fingers) with pan-1. Interacts with kgb-1; this may promote glh-1 degradation by the proteasome. In terms of processing, phosphorylated by kgb-1 (in vitro); this may be responsible for its degradation by the proteasome.

It localises to the cytoplasm. The protein resides in the cytoplasmic granule. The protein localises to the perinuclear region. It carries out the reaction ATP + H2O = ADP + phosphate + H(+). Its function is as follows. Probable ATP-binding RNA helicase. May act redundantly with the P-granule component glh-4 to regulate the formation of the granular structure of P-granules in embryos. Plays a role in positively regulating the localization of pgl-1 to P-granules. May play a role in transgenerational epigenetic inheritance. May protect somatic cells from excessive apoptosis during normal development. This is ATP-dependent RNA helicase glh-1 from Caenorhabditis elegans.